An 85-amino-acid polypeptide reads, in one-letter code: Small ribosomal subunit protein bS16 (85 aa).

The protein belongs to the bacterial ribosomal protein bS16 family.

This chain is Small ribosomal subunit protein bS16, found in Clostridium novyi (strain NT).